The sequence spans 638 residues: 1-deoxy-D-xylulose-5-phosphate synthase (638 aa).

Residues H72 and 113 to 115 (GHA) contribute to the thiamine diphosphate site. D144 provides a ligand contact to Mg(2+). Thiamine diphosphate contacts are provided by residues 145–146 (GA), N174, Y287, and E370. N174 is a Mg(2+) binding site.

Belongs to the transketolase family. DXPS subfamily. In terms of assembly, homodimer. The cofactor is Mg(2+). Requires thiamine diphosphate as cofactor.

The enzyme catalyses D-glyceraldehyde 3-phosphate + pyruvate + H(+) = 1-deoxy-D-xylulose 5-phosphate + CO2. The protein operates within metabolic intermediate biosynthesis; 1-deoxy-D-xylulose 5-phosphate biosynthesis; 1-deoxy-D-xylulose 5-phosphate from D-glyceraldehyde 3-phosphate and pyruvate: step 1/1. Its function is as follows. Catalyzes the acyloin condensation reaction between C atoms 2 and 3 of pyruvate and glyceraldehyde 3-phosphate to yield 1-deoxy-D-xylulose-5-phosphate (DXP). The protein is 1-deoxy-D-xylulose-5-phosphate synthase of Thermosynechococcus vestitus (strain NIES-2133 / IAM M-273 / BP-1).